The sequence spans 350 residues: Bifunctional methylenetetrahydrofolate dehydrogenase/cyclohydrolase, mitochondrial (350 aa).

The N-terminal 35 residues, 1–35 (MAATSLMSALAARLLQPAHSCSLRLRPFHLAAVRN), are a transit peptide targeting the mitochondrion. Lysine 50 bears the N6-acetyllysine; alternate mark. Lysine 50 participates in a covalent cross-link: Glycyl lysine isopeptide (Lys-Gly) (interchain with G-Cter in SUMO2); alternate. Substrate contacts are provided by residues 84–88 (YVLNK) and 131–133 (VQL). NAD(+)-binding positions include 200–202 (GRS) and arginine 233. 309-313 (PGGVG) lines the substrate pocket.

It belongs to the tetrahydrofolate dehydrogenase/cyclohydrolase family. Homodimer. It depends on Mg(2+) as a cofactor.

It is found in the mitochondrion. The catalysed reaction is (6R)-5,10-methylene-5,6,7,8-tetrahydrofolate + NAD(+) = (6R)-5,10-methenyltetrahydrofolate + NADH. The enzyme catalyses (6R)-5,10-methenyltetrahydrofolate + H2O = (6R)-10-formyltetrahydrofolate + H(+). Its function is as follows. Although its dehydrogenase activity is NAD-specific, it can also utilize NADP at a reduced efficiency. The protein is Bifunctional methylenetetrahydrofolate dehydrogenase/cyclohydrolase, mitochondrial (MTHFD2) of Homo sapiens (Human).